Reading from the N-terminus, the 392-residue chain is Putative RNA-binding protein Luc7-like 2 (392 aa).

S18 bears the Phosphoserine mark. The stretch at 102-177 (EVSKKRLAET…EAEEVYRNSM (76 aa)) forms a coiled coil. The span at 235–257 (KQEKRNQERLKRREEREREEREK) shows a compositional bias: basic and acidic residues. A disordered region spans residues 235-392 (KQEKRNQERL…SSEEREAGEI (158 aa)). Over residues 258–321 (LRRSRSHSKN…RSRSHQRSRH (64 aa)) the composition is skewed to basic residues. A 5-hydroxylysine; by JMJD6 mark is found at K266 and K269. 2 stretches are compositionally biased toward basic and acidic residues: residues 337 to 364 (KERFRDQDLASRDRDRSSRDRSPRDRDR) and 377 to 392 (RSEDRRSSEEREAGEI).

The protein belongs to the Luc7 family. In terms of assembly, interacts with SCNM1. All isoforms are expressed in brain, kidney, heart, thymus, stomach, skeletal muscle, testis and spinal cord.

The protein localises to the nucleus speckle. It is found in the nucleus. Its subcellular location is the nucleoplasm. Functionally, may bind to RNA via its Arg/Ser-rich domain. The chain is Putative RNA-binding protein Luc7-like 2 (Luc7l2) from Mus musculus (Mouse).